We begin with the raw amino-acid sequence, 128 residues long: Large ribosomal subunit protein uL22 (128 aa).

Belongs to the universal ribosomal protein uL22 family. In terms of assembly, part of the 50S ribosomal subunit.

This protein binds specifically to 23S rRNA; its binding is stimulated by other ribosomal proteins, e.g. L4, L17, and L20. It is important during the early stages of 50S assembly. It makes multiple contacts with different domains of the 23S rRNA in the assembled 50S subunit and ribosome. In terms of biological role, the globular domain of the protein is located near the polypeptide exit tunnel on the outside of the subunit, while an extended beta-hairpin is found that lines the wall of the exit tunnel in the center of the 70S ribosome. In Prochlorococcus marinus (strain MIT 9515), this protein is Large ribosomal subunit protein uL22.